Here is a 471-residue protein sequence, read N- to C-terminus: Tetratricopeptide repeat protein 29 (471 aa).

TPR repeat units follow at residues 92 to 131, 136 to 173, 182 to 215, 234 to 267, 274 to 307, 314 to 347, and 354 to 387; these read DKLP…EAAE, YEEV…AQLI, AEAE…THGR, VRTY…AREG, GEAS…STSL, GRAY…ARNN, and IRAC…AMEL. The disordered stretch occupies residues 449–471; it reads ATEDNIYQLPDAEEETRRSPENQ.

As to expression, expressed in spermatozoa (at protein level).

Its subcellular location is the cytoplasm. The protein localises to the cytoskeleton. The protein resides in the flagellum axoneme. Its function is as follows. Axonemal protein which is implicated in axonemal and/or peri-axonemal structure assembly and regulates flagellum assembly and beating and therefore sperm motility. This is Tetratricopeptide repeat protein 29 (Ttc29) from Mus musculus (Mouse).